The following is a 205-amino-acid chain: Large ribosomal subunit protein uL4 (205 aa).

The segment at 56-78 (VSGTTAKPYRQKHTGRARQGSLR) is disordered.

The protein belongs to the universal ribosomal protein uL4 family. Part of the 50S ribosomal subunit.

Its function is as follows. One of the primary rRNA binding proteins, this protein initially binds near the 5'-end of the 23S rRNA. It is important during the early stages of 50S assembly. It makes multiple contacts with different domains of the 23S rRNA in the assembled 50S subunit and ribosome. Forms part of the polypeptide exit tunnel. The protein is Large ribosomal subunit protein uL4 of Ehrlichia ruminantium (strain Gardel).